The sequence spans 513 residues: Cytochrome P450 1A2 (513 aa).

O-linked (GlcNAc) serine glycosylation occurs at Ser-68. Residue Cys-456 coordinates heme.

Belongs to the cytochrome P450 family. As to quaternary structure, interacts with PGRMC1; the interaction requires PGRMC1 homodimerization. The cofactor is heme.

It localises to the endoplasmic reticulum membrane. The protein resides in the microsome membrane. It carries out the reaction an organic molecule + reduced [NADPH--hemoprotein reductase] + O2 = an alcohol + oxidized [NADPH--hemoprotein reductase] + H2O + H(+). The enzyme catalyses 17beta-estradiol + reduced [NADPH--hemoprotein reductase] + O2 = 2-hydroxy-17beta-estradiol + oxidized [NADPH--hemoprotein reductase] + H2O + H(+). It catalyses the reaction 17beta-estradiol + reduced [NADPH--hemoprotein reductase] + O2 = 4-hydroxy-17beta-estradiol + oxidized [NADPH--hemoprotein reductase] + H2O + H(+). The catalysed reaction is estrone + reduced [NADPH--hemoprotein reductase] + O2 = 2-hydroxyestrone + oxidized [NADPH--hemoprotein reductase] + H2O + H(+). It carries out the reaction estrone + reduced [NADPH--hemoprotein reductase] + O2 = 4-hydroxyestrone + oxidized [NADPH--hemoprotein reductase] + H2O + H(+). The enzyme catalyses cholesterol + reduced [NADPH--hemoprotein reductase] + O2 = 25-hydroxycholesterol + oxidized [NADPH--hemoprotein reductase] + H2O + H(+). It catalyses the reaction all-trans-retinol + reduced [NADPH--hemoprotein reductase] + O2 = all-trans-retinal + oxidized [NADPH--hemoprotein reductase] + 2 H2O + H(+). The catalysed reaction is all-trans-retinal + reduced [NADPH--hemoprotein reductase] + O2 = all-trans-retinoate + oxidized [NADPH--hemoprotein reductase] + H2O + 2 H(+). It carries out the reaction (5Z,8Z,11Z,14Z)-eicosatetraenoate + reduced [NADPH--hemoprotein reductase] + O2 = (14R,15S)-epoxy-(5Z,8Z,11Z)-eicosatrienoate + oxidized [NADPH--hemoprotein reductase] + H2O + H(+). The enzyme catalyses (5Z,8Z,11Z,14Z)-eicosatetraenoate + reduced [NADPH--hemoprotein reductase] + O2 = (14S,15R)-epoxy-(5Z,8Z,11Z)-eicosatrienoate + oxidized [NADPH--hemoprotein reductase] + H2O + H(+). It catalyses the reaction (5Z,8Z,11Z,14Z,17Z)-eicosapentaenoate + reduced [NADPH--hemoprotein reductase] + O2 = (17R,18S)-epoxy-(5Z,8Z,11Z,14Z)-eicosatetraenoate + oxidized [NADPH--hemoprotein reductase] + H2O + H(+). The catalysed reaction is (4Z,7Z,10Z,13Z,16Z,19Z)-docosahexaenoate + reduced [NADPH--hemoprotein reductase] + O2 = (19R,20S)-epoxy-(4Z,7Z,10Z,13Z,16Z)-docosapentaenoate + oxidized [NADPH--hemoprotein reductase] + H2O + H(+). It carries out the reaction (5S)-hydroperoxy-(6E,8Z,11Z,14Z)-eicosatetraenoate = 5-oxo-(6E,8Z,11Z,14Z)-eicosatetraenoate + H2O. The enzyme catalyses (12S)-hydroperoxy-(5Z,8Z,10E,14Z)-eicosatetraenoate = 12-oxo-(5Z,8Z,10E,14Z)-eicosatetraenoate + H2O. It catalyses the reaction (15S)-hydroperoxy-(5Z,8Z,11Z,13E)-eicosatetraenoate = 15-oxo-(5Z,8Z,11Z,13E)-eicosatetraenoate + H2O. The catalysed reaction is (13S)-hydroperoxy-(9Z,11E)-octadecadienoate = 13-oxo-(9Z,11E)-octadecadienoate + H2O. It carries out the reaction (5Z,8Z,11Z,14Z)-eicosatetraenoate + reduced [NADPH--hemoprotein reductase] + O2 = 13-hydroxy-(5Z,8Z,11Z,14Z)-eicosatetraenoate + oxidized [NADPH--hemoprotein reductase] + H2O + H(+). The enzyme catalyses (5Z,8Z,11Z,14Z)-eicosatetraenoate + reduced [NADPH--hemoprotein reductase] + O2 = 19-hydroxy-(5Z,8Z,11Z,14Z)-eicosatetraenoate + oxidized [NADPH--hemoprotein reductase] + H2O + H(+). It catalyses the reaction (9Z,12Z)-octadecadienoate + reduced [NADPH--hemoprotein reductase] + O2 = 11-hydroxy-(9Z,12Z)-octadecadienoate + oxidized [NADPH--hemoprotein reductase] + H2O + H(+). The protein operates within cofactor metabolism; retinol metabolism. Its pathway is steroid metabolism; cholesterol metabolism. It participates in lipid metabolism; arachidonate metabolism. In terms of biological role, a cytochrome P450 monooxygenase involved in the metabolism of various endogenous substrates, including fatty acids, steroid hormones and vitamins. Mechanistically, uses molecular oxygen inserting one oxygen atom into a substrate, and reducing the second into a water molecule, with two electrons provided by NADPH via cytochrome P450 reductase (NADPH--hemoprotein reductase). Catalyzes the hydroxylation of carbon-hydrogen bonds. Exhibits high catalytic activity for the formation of hydroxyestrogens from estrone (E1) and 17beta-estradiol (E2), namely 2-hydroxy E1 and E2. Metabolizes cholesterol toward 25-hydroxycholesterol, a physiological regulator of cellular cholesterol homeostasis. May act as a major enzyme for all-trans retinoic acid biosynthesis in the liver. Catalyzes two successive oxidative transformation of all-trans retinol to all-trans retinal and then to the active form all-trans retinoic acid. Primarily catalyzes stereoselective epoxidation of the last double bond of polyunsaturated fatty acids (PUFA), displaying a strong preference for the (R,S) stereoisomer. Catalyzes bisallylic hydroxylation and omega-1 hydroxylation of PUFA. May also participate in eicosanoids metabolism by converting hydroperoxide species into oxo metabolites (lipoxygenase-like reaction, NADPH-independent). Plays a role in the oxidative metabolism of xenobiotics. Catalyzes the N-hydroxylation of heterocyclic amines and the O-deethylation of phenacetin. Metabolizes caffeine via N3-demethylation. This is Cytochrome P450 1A2 (Cyp1a2) from Rattus norvegicus (Rat).